The following is a 194-amino-acid chain: MYDFLTGIIKTIAAGYVGIDVNGIGFRVFTPNPYEYNQNDQTTIFTEQIVRDNQISLYGFKTVKERNLFQKLLNVSGIGPKSALAIIAGGDRDGLIAAVENGKPKYLTKFPGIGNKTAQQIVLDLKGKLGDFSKNIAPMKNLLENSAELDDALAALVALGFSSKEVNKINPKLASLGELTTDAYIQKGLKLLTK.

Positions Met1–Lys61 are domain I. Residues Thr62–Met139 are domain II. The flexible linker stretch occupies residues Met139–Leu143. A domain III region spans residues Glu144–Lys194.

The protein belongs to the RuvA family. As to quaternary structure, homotetramer. Forms an RuvA(8)-RuvB(12)-Holliday junction (HJ) complex. HJ DNA is sandwiched between 2 RuvA tetramers; dsDNA enters through RuvA and exits via RuvB. An RuvB hexamer assembles on each DNA strand where it exits the tetramer. Each RuvB hexamer is contacted by two RuvA subunits (via domain III) on 2 adjacent RuvB subunits; this complex drives branch migration. In the full resolvosome a probable DNA-RuvA(4)-RuvB(12)-RuvC(2) complex forms which resolves the HJ.

It localises to the cytoplasm. The RuvA-RuvB-RuvC complex processes Holliday junction (HJ) DNA during genetic recombination and DNA repair, while the RuvA-RuvB complex plays an important role in the rescue of blocked DNA replication forks via replication fork reversal (RFR). RuvA specifically binds to HJ cruciform DNA, conferring on it an open structure. The RuvB hexamer acts as an ATP-dependent pump, pulling dsDNA into and through the RuvAB complex. HJ branch migration allows RuvC to scan DNA until it finds its consensus sequence, where it cleaves and resolves the cruciform DNA. The sequence is that of Holliday junction branch migration complex subunit RuvA from Oenococcus oeni (strain ATCC BAA-331 / PSU-1).